Here is an 89-residue protein sequence, read N- to C-terminus: Small ribosomal subunit protein uS15 (89 aa).

Positions 1 to 21 (MAITQERKNQLINEFKTHESD) are enriched in basic and acidic residues. The tract at residues 1–24 (MAITQERKNQLINEFKTHESDTGS) is disordered.

This sequence belongs to the universal ribosomal protein uS15 family. As to quaternary structure, part of the 30S ribosomal subunit. Forms a bridge to the 50S subunit in the 70S ribosome, contacting the 23S rRNA.

Its function is as follows. One of the primary rRNA binding proteins, it binds directly to 16S rRNA where it helps nucleate assembly of the platform of the 30S subunit by binding and bridging several RNA helices of the 16S rRNA. In terms of biological role, forms an intersubunit bridge (bridge B4) with the 23S rRNA of the 50S subunit in the ribosome. In Bacillus subtilis (strain 168), this protein is Small ribosomal subunit protein uS15.